The following is a 150-amino-acid chain: SsrA-binding protein (150 aa).

The protein belongs to the SmpB family.

It localises to the cytoplasm. Functionally, required for rescue of stalled ribosomes mediated by trans-translation. Binds to transfer-messenger RNA (tmRNA), required for stable association of tmRNA with ribosomes. tmRNA and SmpB together mimic tRNA shape, replacing the anticodon stem-loop with SmpB. tmRNA is encoded by the ssrA gene; the 2 termini fold to resemble tRNA(Ala) and it encodes a 'tag peptide', a short internal open reading frame. During trans-translation Ala-aminoacylated tmRNA acts like a tRNA, entering the A-site of stalled ribosomes, displacing the stalled mRNA. The ribosome then switches to translate the ORF on the tmRNA; the nascent peptide is terminated with the 'tag peptide' encoded by the tmRNA and targeted for degradation. The ribosome is freed to recommence translation, which seems to be the essential function of trans-translation. This Campylobacter jejuni subsp. doylei (strain ATCC BAA-1458 / RM4099 / 269.97) protein is SsrA-binding protein.